We begin with the raw amino-acid sequence, 1444 residues long: Protein shortage in chiasmata 1 ortholog (1444 aa).

Low complexity predominate over residues 1106 to 1117 (SITKSPQISSPQ). The interval 1106 to 1129 (SITKSPQISSPQENRNQISTLSSQ) is disordered.

It belongs to the XPF family. Highly divergent. As to quaternary structure, interacts with TEX11. Interacts with SPO16.

The protein resides in the chromosome. Its function is as follows. ATPase required during meiosis for the formation of crossover recombination intermediates. Binds DNA: preferentially binds to single-stranded DNA and DNA branched structures. Does not show nuclease activity in vitro, but shows ATPase activity, which is stimulated by the presence of single-stranded DNA. Plays a key role in homologous recombination and crossing-over in meiotic prophase I in male and female germ cells. Required for proper synaptonemal complex assembly and homologous chromosome pairing. Requiref for recruitment TEX11 and MSH4 to recombination intermediates. The polypeptide is Protein shortage in chiasmata 1 ortholog (Homo sapiens (Human)).